The following is a 278-amino-acid chain: Pyrroline-5-carboxylate reductase 2 (278 aa).

Belongs to the pyrroline-5-carboxylate reductase family.

The protein resides in the cytoplasm. It catalyses the reaction L-proline + NADP(+) = (S)-1-pyrroline-5-carboxylate + NADPH + 2 H(+). It carries out the reaction L-proline + NAD(+) = (S)-1-pyrroline-5-carboxylate + NADH + 2 H(+). It participates in amino-acid biosynthesis; L-proline biosynthesis; L-proline from L-glutamate 5-semialdehyde: step 1/1. Catalyzes the reduction of 1-pyrroline-5-carboxylate (PCA) to L-proline. The protein is Pyrroline-5-carboxylate reductase 2 (proI) of Bacillus subtilis (strain 168).